A 537-amino-acid chain; its full sequence is Eukaryotic translation initiation factor 3 subunit L (537 aa).

Over residues 1–19 (MSRRVEFDMSHEDHTDRRR) the composition is skewed to basic and acidic residues. A disordered region spans residues 1–28 (MSRRVEFDMSHEDHTDRRRTNTFSSEED). The 189-residue stretch at 297 to 485 (EATKMFVNCL…GPSTVDDDEP (189 aa)) folds into the PCI domain.

Belongs to the eIF-3 subunit L family. In terms of assembly, component of the eukaryotic translation initiation factor 3 (eIF-3) complex.

It localises to the cytoplasm. In terms of biological role, component of the eukaryotic translation initiation factor 3 (eIF-3) complex, which is involved in protein synthesis of a specialized repertoire of mRNAs and, together with other initiation factors, stimulates binding of mRNA and methionyl-tRNAi to the 40S ribosome. The eIF-3 complex specifically targets and initiates translation of a subset of mRNAs involved in cell proliferation. In Caenorhabditis briggsae, this protein is Eukaryotic translation initiation factor 3 subunit L.